The primary structure comprises 894 residues: DNA mismatch repair protein MutS (894 aa).

ATP is bound at residue 632–639 (GPNMGGKS).

The protein belongs to the DNA mismatch repair MutS family.

Its function is as follows. This protein is involved in the repair of mismatches in DNA. It is possible that it carries out the mismatch recognition step. This protein has a weak ATPase activity. The polypeptide is DNA mismatch repair protein MutS (Paraburkholderia xenovorans (strain LB400)).